Here is a 143-residue protein sequence, read N- to C-terminus: Large ribosomal subunit protein uL13 (143 aa).

This sequence belongs to the universal ribosomal protein uL13 family. As to quaternary structure, part of the 50S ribosomal subunit.

Its function is as follows. This protein is one of the early assembly proteins of the 50S ribosomal subunit, although it is not seen to bind rRNA by itself. It is important during the early stages of 50S assembly. This Dehalococcoides mccartyi (strain ATCC BAA-2266 / KCTC 15142 / 195) (Dehalococcoides ethenogenes (strain 195)) protein is Large ribosomal subunit protein uL13.